The sequence spans 332 residues: Chorismate synthase (332 aa).

Arginine 46 is an NADP(+) binding site. FMN-binding positions include 123 to 125 (HFS), glycine 253, 268 to 272 (KPTSS), and arginine 295.

Belongs to the chorismate synthase family. Homotetramer. FMNH2 serves as cofactor.

The enzyme catalyses 5-O-(1-carboxyvinyl)-3-phosphoshikimate = chorismate + phosphate. Its pathway is metabolic intermediate biosynthesis; chorismate biosynthesis; chorismate from D-erythrose 4-phosphate and phosphoenolpyruvate: step 7/7. Functionally, catalyzes the anti-1,4-elimination of the C-3 phosphate and the C-6 proR hydrogen from 5-enolpyruvylshikimate-3-phosphate (EPSP) to yield chorismate, which is the branch point compound that serves as the starting substrate for the three terminal pathways of aromatic amino acid biosynthesis. This reaction introduces a second double bond into the aromatic ring system. In Chitinophaga pinensis (strain ATCC 43595 / DSM 2588 / LMG 13176 / NBRC 15968 / NCIMB 11800 / UQM 2034), this protein is Chorismate synthase.